The following is a 173-amino-acid chain: Catabolic 3-dehydroquinase (173 aa).

The active-site Proton acceptor is Tyr-26. Substrate contacts are provided by Asn-102, His-108, and Asp-115. The active-site Proton donor is His-128. Substrate is bound by residues 129–130 (VS) and Arg-139.

The protein belongs to the type-II 3-dehydroquinase family. As to quaternary structure, homododecamer. Adopts a ring-like structure, composed of an arrangement of two hexameric rings stacked on top of one another.

The enzyme catalyses 3-dehydroquinate = 3-dehydroshikimate + H2O. It participates in aromatic compound metabolism; 3,4-dihydroxybenzoate biosynthesis; 3,4-dihydroxybenzoate from 3-dehydroquinate: step 1/2. 3-dehydroquinate dehydratase; part of the qa gene cluster that mediates the catabolism of quinic acid (QA) and as such, allows the use of QA as a sole carbon source. Catalyzes the second reaction in the inducible quinic acid catabolic pathway by converting 3-dehydroquinate into 3-dehydroshikimate. The qa cluster encodes 3 inducible enymes (qa-2, qa-3 and qa-4) catalyzing the first three reactions in the catabolism of quinic acid to protocatechuic acid (also known as 3,4-Dihydroxybenzoic acid). This is Catabolic 3-dehydroquinase from Neurospora crassa (strain ATCC 24698 / 74-OR23-1A / CBS 708.71 / DSM 1257 / FGSC 987).